The chain runs to 196 residues: Proteasome subunit beta (196 aa).

Residue Met-1 is a propeptide, removed in mature form; by autocatalysis. Residue Thr-2 is the Nucleophile of the active site.

Belongs to the peptidase T1B family. The 20S proteasome core is composed of 14 alpha and 14 beta subunits that assemble into four stacked heptameric rings, resulting in a barrel-shaped structure. The two inner rings, each composed of seven catalytic beta subunits, are sandwiched by two outer rings, each composed of seven alpha subunits. The catalytic chamber with the active sites is on the inside of the barrel. Has a gated structure, the ends of the cylinder being occluded by the N-termini of the alpha-subunits. Is capped at one or both ends by the proteasome regulatory ATPase, PAN.

The protein resides in the cytoplasm. The catalysed reaction is Cleavage of peptide bonds with very broad specificity.. The formation of the proteasomal ATPase PAN-20S proteasome complex, via the docking of the C-termini of PAN into the intersubunit pockets in the alpha-rings, triggers opening of the gate for substrate entry. Interconversion between the open-gate and close-gate conformations leads to a dynamic regulation of the 20S proteasome proteolysis activity. In terms of biological role, component of the proteasome core, a large protease complex with broad specificity involved in protein degradation. The protein is Proteasome subunit beta of Nanoarchaeum equitans (strain Kin4-M).